Here is a 231-residue protein sequence, read N- to C-terminus: MAAFPNLNSDAGLKKLDEHLLTRSYITGYQASKDDITVFAALAKPPTSQYVNASRWYNHIDALLRISGVSAEGSGVIVEGSAPITEEAVATPPAADSKDAAADEEDDDDVDLFGEETEEEKKAAEERAASVKASTKKKESGKSSVLIDIKPWDDETDMKKLEEAVKSIQMEGLFWGASKLVPVGYGIKKLQILCTIVDDLVSIDTMIEEQLTVEPINEYVQSCDIVAFNKI.

N-acetylalanine is present on Ala2. A GST C-terminal domain is found at 10-73 (DAGLKKLDEH…LRISGVSAEG (64 aa)). Disordered regions lie at residues 85–108 (TEEA…EDDD) and 116–135 (ETEE…KAST). Positions 119–129 (EEKKAAEERAA) are enriched in basic and acidic residues.

This sequence belongs to the EF-1-beta/EF-1-delta family. As to quaternary structure, EF-1 is composed of 4 subunits: alpha, beta (1B-alpha=beta'), delta (1B-beta), and gamma (1B-gamma).

Functionally, EF-1-beta and EF-1-delta stimulate the exchange of GDP bound to EF-1-alpha to GTP. The sequence is that of Elongation factor 1-delta 1 from Arabidopsis thaliana (Mouse-ear cress).